The primary structure comprises 533 residues: Putative adhesin P1-like protein MPN_409 (533 aa).

Disordered stretches follow at residues 15–45 (KNHR…GSRS) and 92–166 (SGWR…SITP). Residues 28 to 45 (TGAGSSSGTSTNTSGSRS) are compositionally biased toward low complexity. Residues 95 to 107 (RNDKNGQSDENHT) are compositionally biased toward basic and acidic residues.

The protein belongs to the adhesin P1 family.

This Mycoplasma pneumoniae (strain ATCC 29342 / M129 / Subtype 1) (Mycoplasmoides pneumoniae) protein is Putative adhesin P1-like protein MPN_409.